Reading from the N-terminus, the 125-residue chain is Snaclec VP12 subunit B (125 aa).

3 cysteine pairs are disulfide-bonded: Cys-4–Cys-15, Cys-32–Cys-121, and Cys-98–Cys-113. One can recognise a C-type lectin domain in the interval 11–122; it reads FEKYCYKVFQ…CNDPRYFVCK (112 aa).

The protein belongs to the snaclec family. As to quaternary structure, heterodimer of subunits alpha and beta; disulfide-linked. In terms of tissue distribution, expressed by the venom gland.

It is found in the secreted. Functionally, inhibits integrin alpha-2/beta-1- (ITGA2/ITGB1) dependent melanoma metastasis. The protein is Snaclec VP12 subunit B of Daboia palaestinae (Palestine viper).